The following is a 321-amino-acid chain: D-alanine--D-alanine ligase (321 aa).

Residues 121–315 (RSWFLTNNIN…FVNLIEEILK (195 aa)) form the ATP-grasp domain. 148–199 (IKRPYVIKPFTQGSSIGVEVIFEEDDFNFANYDFPYGDEVIIEKYIKGRELQ) contacts ATP. Mg(2+) is bound by residues Glu268, Glu282, and Asn284.

It belongs to the D-alanine--D-alanine ligase family. It depends on Mg(2+) as a cofactor. Mn(2+) is required as a cofactor.

The protein resides in the cytoplasm. It carries out the reaction 2 D-alanine + ATP = D-alanyl-D-alanine + ADP + phosphate + H(+). It functions in the pathway cell wall biogenesis; peptidoglycan biosynthesis. Its function is as follows. Cell wall formation. This chain is D-alanine--D-alanine ligase, found in Rickettsia bellii (strain RML369-C).